Reading from the N-terminus, the 512-residue chain is Cytochrome P450 monooxygenase cheE (512 aa).

A helical transmembrane segment spans residues 5–27; the sequence is YFAAESSWSPYVILVLALAAMVA. Residues asparagine 53, asparagine 124, and asparagine 168 are each glycosylated (N-linked (GlcNAc...) asparagine). Cysteine 455 is a binding site for heme. N-linked (GlcNAc...) asparagine glycosylation is found at asparagine 499 and asparagine 508.

This sequence belongs to the cytochrome P450 family. Heme is required as a cofactor.

The protein localises to the membrane. Its pathway is secondary metabolite biosynthesis. Its function is as follows. Cytochrome P450 monooxygenase; part of the gene cluster that mediates the biosynthesis of chaetoglobosin A which has a unique inhibitory activity against actin polymerization in mammalian cells. Chaetoglobosin A and its intermediates are involved in the morphological differentiation of C.globosum. The first step of the pathway is the synthesis of prochaetoglobosin I via condensation of one acetyl-CoA, 8 malonyl-CoA, and a L-tryptophan molecule by the PKS-NRPS hybrid synthetase cheA, followed by reduction of backbone double bond to install desired geometry by the enoyl reductase cheB. Further multiple oxidation steps performed by the cytochrome P450 monooxygenases cheE and cheG, as well as by the FAD-linked oxidoreductase cheF, lead to the formation of chaetoglobosin A. Depending on the order of action of these reductases, distinct intermediates can be identified. Within the pathway, the cytochrome P450 monooxygenase cheE catalyzes a stereospecific epoxidation on prochaetoglobosin I, cytoglobosin D, and chaetoglobosin J intermediates. The FAD-linked oxidoreductase cheF performs dehydrogenation of the C-20 hydroxyl groups in the 20-dihyrochaetoglobosin A and cytoglobosin D intermediates. Finally, the cytochrome P450 monooxygenase cheG can catalyze the stereospecific dihydroxylation of prochaetoglobosin I and prochaetoglobosin IV at C-19 and C-20, respectively. The Diels-Alderase cheD may play a role in the post-PKS-NRPS biosynthetic steps catalyzing Diels-Alder cyclization. The chain is Cytochrome P450 monooxygenase cheE from Chaetomium globosum (strain ATCC 6205 / CBS 148.51 / DSM 1962 / NBRC 6347 / NRRL 1970) (Soil fungus).